A 411-amino-acid chain; its full sequence is Lissencephaly-1 homolog (411 aa).

A LisH domain is found at 9-41 (QREELNQAIADYLGSNGYGDSLETFRKEADVST). A coiled-coil region spans residues 56-83 (TSVIRLQKKVMELEAKLTEAEKEVIEGA). WD repeat units follow at residues 106-147 (GHRA…RSLK), 148-187 (GHTD…ECVK), 191-230 (GHDH…CVKT), 233-272 (GHRE…CKVE), 275-334 (DHEH…CLLT), 337-376 (GHDN…CMKT), and 379-411 (AHQH…WECR).

This sequence belongs to the WD repeat LIS1/nudF family.

The protein localises to the cytoplasm. It is found in the cytoskeleton. Its subcellular location is the microtubule organizing center. The protein resides in the centrosome. Functionally, positively regulates the activity of the minus-end directed microtubule motor protein dynein. May enhance dynein-mediated microtubule sliding by targeting dynein to the microtubule plus end. Required for several dynein- and microtubule-dependent processes. The protein is Lissencephaly-1 homolog of Drosophila persimilis (Fruit fly).